Here is a 543-residue protein sequence, read N- to C-terminus: RuBisCO large subunit-binding protein subunit alpha, chloroplastic (543 aa).

Residues 1–2 (GA) constitute a chloroplast transit peptide.

This sequence belongs to the chaperonin (HSP60) family. Oligomer of probably six alpha and six beta subunits.

Its subcellular location is the plastid. It localises to the chloroplast. In terms of biological role, this protein binds RuBisCO small and large subunits and is implicated in the assembly of the enzyme oligomer. This Triticum aestivum (Wheat) protein is RuBisCO large subunit-binding protein subunit alpha, chloroplastic.